A 69-amino-acid chain; its full sequence is DNA gyrase inhibitor YacG (69 aa).

Zn(2+) contacts are provided by C14, C17, C33, and C37.

It belongs to the DNA gyrase inhibitor YacG family. As to quaternary structure, interacts with GyrB. It depends on Zn(2+) as a cofactor.

Its function is as follows. Inhibits all the catalytic activities of DNA gyrase by preventing its interaction with DNA. Acts by binding directly to the C-terminal domain of GyrB, which probably disrupts DNA binding by the gyrase. The protein is DNA gyrase inhibitor YacG of Aliivibrio salmonicida (strain LFI1238) (Vibrio salmonicida (strain LFI1238)).